The sequence spans 283 residues: Chromatin modification-related protein png1 (283 aa).

A compositionally biased stretch (low complexity) spans 137–171; it reads YSPSGASSARQTPAPSRSGASTAGRRRTSATTRGA. The tract at residues 137 to 224 is disordered; that stretch reads YSPSGASSAR…NEMVSEEDME (88 aa). Polar residues predominate over residues 181 to 216; it reads YTASLADSGSTRGQKVSNATATTQLETKADSTTPNE. Residues 228-277 form a PHD-type zinc finger; the sequence is EKYCFCQQGSYGQMVACDNANCEREWFHMECVGLKAPPEGTWYCEACRDQ. Cys231, Cys233, Cys244, Cys249, His255, Cys258, Cys271, and Cys274 together coordinate Zn(2+).

The protein belongs to the ING family. Interacts with H3K4me3 and to a lesser extent with H3K4me2. Component of a histone deacetylase complex.

It is found in the nucleus. Component of a histone deacetylase complex responsible for the deacetylation of lysine residues on the N-terminal part of the core histones (H2A, H2B, H3 and H4). Histone deacetylation gives a tag for epigenetic repression and plays an important role in transcriptional regulation, cell cycle progression and developmental events. Has a role in silencing of mating type genes. This is Chromatin modification-related protein png1 (png1) from Schizosaccharomyces pombe (strain 972 / ATCC 24843) (Fission yeast).